Consider the following 278-residue polypeptide: Ribosomal RNA small subunit methyltransferase A (278 aa).

Residues N25, L27, G52, E73, D97, and N117 each contribute to the S-adenosyl-L-methionine site.

It belongs to the class I-like SAM-binding methyltransferase superfamily. rRNA adenine N(6)-methyltransferase family. RsmA subfamily.

It is found in the cytoplasm. The enzyme catalyses adenosine(1518)/adenosine(1519) in 16S rRNA + 4 S-adenosyl-L-methionine = N(6)-dimethyladenosine(1518)/N(6)-dimethyladenosine(1519) in 16S rRNA + 4 S-adenosyl-L-homocysteine + 4 H(+). Functionally, specifically dimethylates two adjacent adenosines (A1518 and A1519) in the loop of a conserved hairpin near the 3'-end of 16S rRNA in the 30S particle. May play a critical role in biogenesis of 30S subunits. This chain is Ribosomal RNA small subunit methyltransferase A, found in Desulfitobacterium hafniense (strain DSM 10664 / DCB-2).